Consider the following 633-residue polypeptide: Chaperone protein dnaK2 (633 aa).

Residue threonine 197 is modified to Phosphothreonine; by autocatalysis. The disordered stretch occupies residues 600-633 (SNAASQAADGTSSESNNSTEGNDDVIDAEFTESK). Residues 608 to 619 (DGTSSESNNSTE) are compositionally biased toward low complexity. The span at 620-633 (GNDDVIDAEFTESK) shows a compositional bias: acidic residues.

Belongs to the heat shock protein 70 family.

Its function is as follows. Acts as a chaperone. This is Chaperone protein dnaK2 (dnaK2) from Prochlorococcus marinus (strain SARG / CCMP1375 / SS120).